A 775-amino-acid chain; its full sequence is N6-adenosine-methyltransferase non-catalytic subunit MTB (775 aa).

Residues 1 to 10 (MKKKQEESSL) show a composition bias toward basic and acidic residues. 2 disordered regions span residues 1 to 424 (MKKK…GAIP) and 520 to 569 (DRGG…EQND). Residues 40–49 (FESSSRSGGS) show a composition bias toward low complexity. Basic and acidic residues-rich tracts occupy residues 50 to 79 (KSKE…ERTH), 100 to 117 (DGDH…DSGG), 125 to 222 (EHGE…LKDN), 229 to 278 (SSGD…RGEA), and 333 to 344 (EWAHNQEGRQRS). Over residues 375–400 (QRGSTPGRTNFVQTPNRGYQTPQGTR) the composition is skewed to polar residues.

This sequence belongs to the MT-A70-like family. Forms homodimers. Interacts with HAKAI, MTA and VIR. Associates with MTA, FIP37, VIR and HAKAI to form the m6A writer complex which is essential for adenosine methylation at specific mRNA sequences.

The protein resides in the nucleus speckle. The protein localises to the nucleus. Its subcellular location is the nucleoplasm. In terms of biological role, probable non-catalytic subunit of the N6-methyltransferase complex, a multiprotein complex that mediates N6-methyladenosine (m6A) methylation at the 5'-[AG]GAC-3' consensus sites of some mRNAs. Associates with MTA, FIP37, VIR and HAKAI to form the m6A writer complex which is essential for adenosine methylation at specific mRNA sequences. N6-methyladenosine (m6A) plays a role in mRNA stability, processing, translation efficiency and editing. The sequence is that of N6-adenosine-methyltransferase non-catalytic subunit MTB from Arabidopsis thaliana (Mouse-ear cress).